Consider the following 190-residue polypeptide: Ribosome hibernation promotion factor (190 aa).

The required for ribosome-binding stretch occupies residues 101 to 190 (RDRGDQEVFV…KYGLIQTSEQ (90 aa)).

Belongs to the HPF/YfiA ribosome-associated protein family. Long HPF subfamily. As to quaternary structure, interacts with 100S ribosomes during exponential growth, as 100S ribosomes decrease (after 28 hours) also found associated with 30s and 50S subunits.

Its subcellular location is the cytoplasm. In terms of biological role, required and sufficient for dimerization of active 70S ribosomes into 100S ribosomes. 110S ribosomes are probably translationally inactive and may serve as a reservoir of easily reactivated ribosomes when necessary in the cell. Also reduces the translation efficiency of a small number of genes. Unlike E.coli, 100S ribosomes are present during exponential growth and decrease during stationary phase. This strain produces 30% fewer 100S ribosomes than strain N315 and RN4200 under the same growth conditions. The polypeptide is Ribosome hibernation promotion factor (Staphylococcus aureus (strain USA300)).